The primary structure comprises 77 residues: Serine protease inhibitor 1 (77 aa).

A signal peptide spans 1 to 17 (MMFTPLIVLTLLVLATA). 5 cysteine pairs are disulfide-bonded: C21-C53, C30-C48, C33-C44, C37-C74, and C55-C68. The region spanning 21–74 (CGPNEQWSDCPGCELQCGESDKPCPAMCGDPKCYCSPDQYRRIPDGRCIRKIQC) is the TIL domain.

It localises to the secreted. Its function is as follows. Defends the organism against the host's proteinases. The chain is Serine protease inhibitor 1 from Anisakis simplex (Herring worm).